Here is a 1226-residue protein sequence, read N- to C-terminus: DNA-directed RNA polymerase subunit beta (1226 aa).

The protein belongs to the RNA polymerase beta chain family. As to quaternary structure, the RNAP catalytic core consists of 2 alpha, 1 beta, 1 beta' and 1 omega subunit. When a sigma factor is associated with the core the holoenzyme is formed, which can initiate transcription.

The catalysed reaction is RNA(n) + a ribonucleoside 5'-triphosphate = RNA(n+1) + diphosphate. In terms of biological role, DNA-dependent RNA polymerase catalyzes the transcription of DNA into RNA using the four ribonucleoside triphosphates as substrates. The chain is DNA-directed RNA polymerase subunit beta from Leptospira borgpetersenii serovar Hardjo-bovis (strain JB197).